The sequence spans 351 residues: Rod outer segment membrane protein 1 (351 aa).

Residues 1-19 (MAPVLPLVLPLQPRIRLAQ) lie on the Cytoplasmic side of the membrane. The chain crosses the membrane as a helical span at residues 20–43 (GLWLLSWLLVLVGGLTLLCSGHLL). Residues 44–64 (VQLWHLGTFLAPSCPFSALPQ) lie on the Lumenal side of the membrane. The helical transmembrane segment at 65–84 (VALAASAVALGTGLVGSGAS) threads the bilayer. The Cytoplasmic segment spans residues 85-102 (RASLDAEQYPPWRGVLGP). The helical transmembrane segment at 103–125 (LLVAGTAGGGGLLVLALGLALAL) threads the bilayer. Residues 126 to 264 (PGTLDTGLEE…EVLLGHLQGL (139 aa)) are Lumenal-facing. A helical membrane pass occupies residues 265 to 286 (ASTLGNMLAVTFLLQTLVLLGL). The Cytoplasmic portion of the chain corresponds to 287 to 351 (RYLQTALEGL…KPPKECLPEA (65 aa)). A disordered region spans residues 325–351 (QGAGPHRPAPGETPPEEKPPKECLPEA). The span at 339-351 (PEEKPPKECLPEA) shows a compositional bias: basic and acidic residues.

The protein belongs to the PRPH2/ROM1 family. As to quaternary structure, homodimer; disulfide-linked. Forms a homotetramer. Forms a heterotetramer with PRPH2. Homotetramer and heterotetramer core complexes go on to form higher order complexes by formation of intermolecular disulfide bonds. Interacts with STX3. Interacts with SNAP25. As to expression, retina photoreceptor (at protein level). In rim region of ROS disks (at protein level).

The protein localises to the photoreceptor inner segment membrane. It localises to the photoreceptor outer segment membrane. Plays a role in rod outer segment (ROS) morphogenesis. May play a role with PRPH2 in the maintenance of the structure of ROS curved disks. Plays a role in the organization of the ROS and maintenance of ROS disk diameter. Involved in the maintenance of the retina outer nuclear layer. The polypeptide is Rod outer segment membrane protein 1 (ROM1) (Bos taurus (Bovine)).